Reading from the N-terminus, the 284-residue chain is Tropomyosin (284 aa).

Positions 1–284 form a coiled coil; that stretch reads MDAIKKKMLM…DQALNELHNM (284 aa). Disordered regions lie at residues 106-134 and 186-221; these read LNST…ENRQ and AETK…EEAY. Basic and acidic residues-rich tracts occupy residues 112-134 and 186-198; these read KLTD…ENRQ and AETK…DELK.

It belongs to the tropomyosin family. Homodimer.

Functionally, tropomyosin, in association with the troponin complex, plays a central role in the calcium dependent regulation of muscle contraction. The chain is Tropomyosin (TPM) from Branchiostoma belcheri (Amphioxus).